Reading from the N-terminus, the 211-residue chain is tRNA (guanine-N(7)-)-methyltransferase (211 aa).

The S-adenosyl-L-methionine site is built by E44, D69, D96, and D118. The active site involves D118. K122 lines the substrate pocket. Residues 124–129 (RHEKRR) are interaction with RNA. Substrate-binding positions include D154 and 191 to 194 (TEYE).

Belongs to the class I-like SAM-binding methyltransferase superfamily. TrmB family.

The enzyme catalyses guanosine(46) in tRNA + S-adenosyl-L-methionine = N(7)-methylguanosine(46) in tRNA + S-adenosyl-L-homocysteine. It participates in tRNA modification; N(7)-methylguanine-tRNA biosynthesis. Catalyzes the formation of N(7)-methylguanine at position 46 (m7G46) in tRNA. This is tRNA (guanine-N(7)-)-methyltransferase from Streptococcus mutans serotype c (strain ATCC 700610 / UA159).